The chain runs to 217 residues: Nitrile hydratase subunit beta (217 aa).

The protein belongs to the nitrile hydratase subunit beta family. As to quaternary structure, heterodimer of an alpha and a beta chain.

It catalyses the reaction an aliphatic primary amide = an aliphatic nitrile + H2O. NHase catalyzes the hydration of various nitrile compounds to the corresponding amides. The polypeptide is Nitrile hydratase subunit beta (nthB) (Pseudomonas putida (Arthrobacter siderocapsulatus)).